The following is a 165-amino-acid chain: UPF0254 protein MmarC6_1720 (165 aa).

This sequence belongs to the UPF0254 family.

This is UPF0254 protein MmarC6_1720 from Methanococcus maripaludis (strain C6 / ATCC BAA-1332).